The sequence spans 255 residues: Venom allergen-1 (255 aa).

The N-terminal stretch at 1–21 (MASHVIVKFITAAILIGSCYA) is a signal peptide. Residues 65–210 (LKKHNELRAE…VIKYYLVCNY (146 aa)) enclose the SCP domain. Asparagine 146 and asparagine 209 each carry an N-linked (GlcNAc...) asparagine glycan.

Belongs to the CRISP family. Interacts with human LRPPRC; the interaction interrupts association between BECN1 and LRPPRC. Interacts with human CD4. As to quaternary structure, (Microbial infection) Interacts with Zika virus envelope protein E and Zika virus-like particles; the interaction does not affect Zika virus replication in human endothelial cells and keratinocytes. In terms of tissue distribution, saliva (at protein level). Female salivary gland. No or low-level expression in female hemolymph, midgut, Malpighian tubule system and ovary. No or low-level expression in male tissues.

Its subcellular location is the secreted. It localises to the host endosome. It is found in the host mitochondrion. In terms of biological role, activates autophagy in human monocytic cells, dendritic cells and macrophages. Promotes activation of human CD4(+) T-cells. Does not affect cytokine expression in human monocytic cells. (Microbial infection) Promotes dengue virus type 2 replication in human monocytic cells, dendritic cells and macrophages. Pro-viral properties are linked to BECN1-mediated autophagy activation in the host. Does not directly interact with the purified envelope protein of dengue virus type 2. Its function is as follows. (Microbial infection) Promotes Zika virus replication in human monocytic cells, dendritic cells and macrophages. Facilitates Zika virus transmission from infected mosquitoes to the host in mouse model. Pro-viral properties are linked to BECN1-mediated autophagy activation in the host. Does not affect Zika virus replication in human endothelial cells and keratinocytes. Functionally, (Microbial infection) Promotes Semliki Forest virus replication in human monocytic cells. In terms of biological role, (Microbial infection) Does not influence Batai virus replication in human monocytic cells. This is Venom allergen-1 from Aedes aegypti (Yellowfever mosquito).